Here is a 473-residue protein sequence, read N- to C-terminus: Cannabinoid receptor 1 (473 aa).

The Extracellular portion of the chain corresponds to Met1–Gln117. Residues Lys2–Val23 form a required for mitochondrial localization region. Residues Asn78 and Asn84 are each glycosylated (N-linked (GlcNAc...) asparagine). Residues Leu118–Leu143 form a helical membrane-spanning segment. The Cytoplasmic portion of the chain corresponds to His144–His155. The helical transmembrane segment at Phe156 to Val176 threads the bilayer. Residues Asp177–Asn188 lie on the Extracellular side of the membrane. A helical membrane pass occupies residues Val189–Ile213. Residues Asp214–Lys233 lie on the Cytoplasmic side of the membrane. Residues Ala234–Trp256 traverse the membrane as a helical segment. Residues Asn257–Glu274 are Extracellular-facing. The chain crosses the membrane as a helical span at residues Thr275–Trp300. The Cytoplasmic portion of the chain corresponds to Lys301–Thr345. Residues Leu346–Tyr366 traverse the membrane as a helical segment. Topologically, residues Asp367–Thr378 are extracellular. A helical transmembrane segment spans residues Val379–Leu400. The Cytoplasmic portion of the chain corresponds to Arg401–Leu473. The S-palmitoyl cysteine moiety is linked to residue Cys416. A phosphoserine mark is found at Ser426 and Ser430.

Belongs to the G-protein coupled receptor 1 family. As to quaternary structure, interacts (via C-terminus) with CNRIP1. Associates with G protein alpha subunits, including G(i) alpha-1/GNAI1, G(i) alpha-3/GNAI3 and G(o)-alpha/GNAO1; palmitoylation is important for interaction with GNAI3 and GNAO1. In terms of processing, palmitoylation at Cys-416 is important for recruitment at both plasma membrane and lipid rafts and association with G protein alpha subunits. In terms of tissue distribution, expressed in the brain, in the striatum, medial septum, descending arm of the band of Broca, the amygdaloid nucleus, the hippocampus and cortex (at protein level). High levels in the lateral striatum. In rostral brain regions, high expression levels in the dorsal lateral striatum, while in the caudal brain regions, high levels are observed in the ventral lateral striatum. Expressed in monocytes/macrophages (at protein level). Expressed in striated muscles and in vascular smooth muscles cells (at protein level).

The protein resides in the cell membrane. It localises to the mitochondrion outer membrane. Its subcellular location is the cell projection. It is found in the axon. The protein localises to the presynapse. Hemopressin, a peptide derived from hemoglobin subunit alpha (HBA1 and/or HBA2), acts as an antagonist peptide: hemopressin-binding efficiently blocks cannabinoid receptor CNR1 and subsequent signaling. In terms of biological role, G-protein coupled receptor for cannabinoids, including endocannabinoids (eCBs), such as N-arachidonoylethanolamide (also called anandamide or AEA) and 2-arachidonoylglycerol (2-AG). Mediates many cannabinoid-induced effects, acting, among others, on food intake, memory loss, gastrointestinal motility, catalepsy, ambulatory activity, anxiety, chronic pain. Signaling typically involves reduction in cyclic AMP. In the hypothalamus, may have a dual effect on mitochondrial respiration depending upon the agonist dose and possibly upon the cell type. Increases respiration at low doses, while decreases respiration at high doses. At high doses, CNR1 signal transduction involves G-protein alpha-i protein activation and subsequent inhibition of mitochondrial soluble adenylate cyclase, decrease in cyclic AMP concentration, inhibition of protein kinase A (PKA)-dependent phosphorylation of specific subunits of the mitochondrial electron transport system, including NDUFS2. In the hypothalamus, inhibits leptin-induced reactive oxygen species (ROS) formation and mediates cannabinoid-induced increase in SREBF1 and FASN gene expression. In response to cannabinoids, drives the release of orexigenic beta-endorphin, but not that of melanocyte-stimulating hormone alpha/alpha-MSH, from hypothalamic POMC neurons, hence promoting food intake. In the hippocampus, regulates cellular respiration and energy production in response to cannabinoids. Involved in cannabinoid-dependent depolarization-induced suppression of inhibition (DSI), a process in which depolarization of CA1 postsynaptic pyramidal neurons mobilizes eCBs, which retrogradely activate presynaptic CB1 receptors, transiently decreasing GABAergic inhibitory neurotransmission. Also reduces excitatory synaptic transmission. In superior cervical ganglions and cerebral vascular smooth muscle cells, inhibits voltage-gated Ca(2+) channels in a constitutive, as well as agonist-dependent manner. Induces leptin production in adipocytes and reduces LRP2-mediated leptin clearance in the kidney, hence participating in hyperleptinemia. In adipose tissue, CNR1 signaling leads to increased expression of SREBF1, ACACA and FASN genes. In the liver, activation by endocannabinoids leads to increased de novo lipogenesis and reduced fatty acid catabolism, associated with increased expression of SREBF1/SREBP-1, GCK, ACACA, ACACB and FASN genes. May also affect de novo cholesterol synthesis and HDL-cholesteryl ether uptake. Peripherally modulates energy metabolism. In high carbohydrate diet-induced obesity, may decrease the expression of mitochondrial dihydrolipoyl dehydrogenase/DLD in striated muscles, as well as that of selected glucose/ pyruvate metabolic enzymes, hence affecting energy expenditure through mitochondrial metabolism. In response to cannabinoid anandamide, elicits a pro-inflammatory response in macrophages, which involves NLRP3 inflammasome activation and IL1B and IL18 secretion. In macrophages infiltrating pancreatic islets, this process may participate in the progression of type-2 diabetes and associated loss of pancreatic beta-cells. In Rattus norvegicus (Rat), this protein is Cannabinoid receptor 1 (Cnr1).